The primary structure comprises 729 residues: Fibroblast growth factor receptor 2 (729 aa).

Residues 1–21 (MFSWSYLMGLVMVATATLSLA) form the signal peptide. Topologically, residues 22 to 285 (RPSYNIAEDT…ELDSSSEYTE (264 aa)) are extracellular. The interval 29–62 (EDTTLEPEDANSSGDDEDDNDGSEDFTNDNNHMR) is disordered. A compositionally biased stretch (acidic residues) spans 31-55 (TTLEPEDANSSGDDEDDNDGSEDFT). Asparagine 39 carries N-linked (GlcNAc...) asparagine glycosylation. 2 Ig-like C2-type domains span residues 64–157 (PYWT…YHLD) and 166–268 (PILQ…AWLT). The tract at residues 71 to 88 (KLEKKLHAVPAANTVKFR) is heparin-binding. Cysteine 89 and cysteine 141 are disulfide-bonded. Asparagine 138, asparagine 151, asparagine 175, asparagine 207, asparagine 228, asparagine 241, and asparagine 256 each carry an N-linked (GlcNAc...) asparagine glycan. Cysteine 188 and cysteine 252 are disulfide-bonded. The chain crosses the membrane as a helical span at residues 286-306 (IAIYCVGGFLITCMIGTIMVC). Residues 307–729 (HMKGRGKKSD…SQHTNGTIKT (423 aa)) lie on the Cytoplasmic side of the membrane. Position 374 is a phosphotyrosine; by autocatalysis (tyrosine 374). The Protein kinase domain occupies 389 to 678 (LTLGKPLGEG…LTQTTNEEYL (290 aa)). Residues 395–403 (LGEGCFGQV), lysine 425, 473–475 (EYA), and asparagine 479 contribute to the ATP site. A Phosphotyrosine; by autocatalysis modification is found at tyrosine 494. Catalysis depends on aspartate 534, which acts as the Proton acceptor. A phosphotyrosine; by autocatalysis mark is found at tyrosine 564, tyrosine 565, and tyrosine 677. The interval 683–729 (PLEQYSPSYPDTRSSCSSGDDSVFSPDAMPYDPCLPKSQHTNGTIKT) is disordered. Low complexity predominate over residues 693-707 (DTRSSCSSGDDSVFS). Polar residues predominate over residues 720–729 (SQHTNGTIKT).

The protein belongs to the protein kinase superfamily. Tyr protein kinase family. Fibroblast growth factor receptor subfamily. In terms of assembly, monomer. Homodimer after ligand binding. In terms of processing, autophosphorylated. Binding of FGF family members together with heparan sulfate proteoglycan or heparin promotes receptor dimerization and autophosphorylation on tyrosine residues. Autophosphorylation occurs in trans between the two FGFR molecules present in the dimer. Post-translationally, N-glycosylated in the endoplasmic reticulum. The N-glycan chains undergo further maturation to an Endo H-resistant form in the Golgi apparatus. Ubiquitinated. FGFR2 is rapidly ubiquitinated after autophosphorylation, leading to internalization and degradation. Subject to degradation both in lysosomes and by the proteasome.

Its subcellular location is the cell membrane. It is found in the golgi apparatus. The protein resides in the cytoplasmic vesicle. It catalyses the reaction L-tyrosyl-[protein] + ATP = O-phospho-L-tyrosyl-[protein] + ADP + H(+). Its activity is regulated as follows. Present in an inactive conformation in the absence of bound ligand. Ligand binding leads to dimerization and activation by autophosphorylation on tyrosine residues. Functionally, tyrosine-protein kinase that acts as a cell-surface receptor for fibroblast growth factors and plays an essential role in the regulation of cell proliferation, differentiation, migration and apoptosis, and in the regulation of embryonic development. Required for normal embryonic patterning, limb bud development, lung morphogenesis, osteogenesis and skin development. Plays an essential role in the regulation of osteoblast differentiation, proliferation and apoptosis, and is required for normal skeleton development. Promotes cell proliferation in keratinocytes and immature osteoblasts, but promotes apoptosis in differentiated osteoblasts. Phosphorylates PLCG1, FRS2 and PAK4. Ligand binding leads to the activation of several signaling cascades. Activation of PLCG1 leads to the production of the cellular signaling molecules diacylglycerol and inositol 1,4,5-trisphosphate. Phosphorylation of FRS2 triggers recruitment of GRB2, GAB1, PIK3R1 and SOS1, and mediates activation of RAS, MAPK1/ERK2, MAPK3/ERK1 and the MAP kinase signaling pathway, as well as of the AKT1 signaling pathway. FGFR2 signaling is down-regulated by ubiquitination, internalization and degradation. Mutations that lead to constitutive kinase activation or impair normal FGFR2 maturation, internalization and degradation lead to aberrant signaling. Over-expressed FGFR2 promotes activation of STAT1. The protein is Fibroblast growth factor receptor 2 (FGFR2) of Notophthalmus viridescens (Eastern newt).